Consider the following 344-residue polypeptide: Tetraacyldisaccharide 4'-kinase (344 aa).

Residue 65–72 (HAGGTGKT) participates in ATP binding.

Belongs to the LpxK family.

The catalysed reaction is a lipid A disaccharide + ATP = a lipid IVA + ADP + H(+). Its pathway is glycolipid biosynthesis; lipid IV(A) biosynthesis; lipid IV(A) from (3R)-3-hydroxytetradecanoyl-[acyl-carrier-protein] and UDP-N-acetyl-alpha-D-glucosamine: step 6/6. Its function is as follows. Transfers the gamma-phosphate of ATP to the 4'-position of a tetraacyldisaccharide 1-phosphate intermediate (termed DS-1-P) to form tetraacyldisaccharide 1,4'-bis-phosphate (lipid IVA). In Neisseria meningitidis serogroup A / serotype 4A (strain DSM 15465 / Z2491), this protein is Tetraacyldisaccharide 4'-kinase.